Consider the following 427-residue polypeptide: BTB/POZ domain-containing protein KCTD16 (427 aa).

The BTB domain maps to 25 to 98 (EVIELNVGGQ…LRDRQVVLPD (74 aa)). Residue tyrosine 112 is modified to Phosphotyrosine. Phosphoserine occurs at positions 130, 137, 143, and 146.

Homopentamer; forms an open pentamer. In contrast to other BTB domain-containing proteins, does not interact with CUL3. Interacts as a tetramer with GABBR1 and GABBR2. As to expression, expressed in the brain, mainly in the hippocampus.

The protein resides in the presynaptic cell membrane. The protein localises to the postsynaptic cell membrane. Auxiliary subunit of GABA-B receptors that determine the pharmacology and kinetics of the receptor response. Increases agonist potency and markedly alter the G-protein signaling of the receptors by accelerating onset and promoting desensitization. The sequence is that of BTB/POZ domain-containing protein KCTD16 (Kctd16) from Mus musculus (Mouse).